The following is a 122-amino-acid chain: Large ribosomal subunit protein uL14 (122 aa).

The protein belongs to the universal ribosomal protein uL14 family. As to quaternary structure, part of the 50S ribosomal subunit. Forms a cluster with proteins L3 and L19. In the 70S ribosome, L14 and L19 interact and together make contacts with the 16S rRNA in bridges B5 and B8.

Binds to 23S rRNA. Forms part of two intersubunit bridges in the 70S ribosome. The sequence is that of Large ribosomal subunit protein uL14 from Marinomonas sp. (strain MWYL1).